The primary structure comprises 854 residues: Lysine-specific demethylase 3 (854 aa).

The segment at 64–88 (QRVQQEEESLGQVPPLTEEEQQRHD) is disordered. A JmjC domain is found at 601 to 806 (LRTGNLNIAS…HCYHLTHEFR (206 aa)). Residues His-643, Asp-645, and His-774 each coordinate Fe cation.

The protein belongs to the JHDM2-like histone demethylase family. Requires Fe(2+) as cofactor. Expressed in neurons close to the dorsal lateral neurons involved in circadian rhythm.

It is found in the nucleus. The protein localises to the cytoplasm. The enzyme catalyses N(6),N(6)-dimethyl-L-lysyl(9)-[histone H3] + 2 2-oxoglutarate + 2 O2 = L-lysyl(9)-[histone H3] + 2 formaldehyde + 2 succinate + 2 CO2. Functionally, histone demethylase that specifically demethylates 'Lys-10' of histone H3 (H3K9), thereby playing a central role in histone code. Demethylation of Lys residue generates formaldehyde and succinate. Probably involved in regulation of chromatin structure, promoting expansion of euchromatin. Negatively regulates rhino-dependent piRNA production capacity of several genomic regions; may help define the frontiers of piRNA clusters by regulating histone methylation levels. May be involved in regulation of behavior and circadian rhythms. This is Lysine-specific demethylase 3 from Drosophila melanogaster (Fruit fly).